A 684-amino-acid polypeptide reads, in one-letter code: Glycine--tRNA ligase beta subunit (684 aa).

Belongs to the class-II aminoacyl-tRNA synthetase family. Tetramer of two alpha and two beta subunits.

The protein localises to the cytoplasm. It carries out the reaction tRNA(Gly) + glycine + ATP = glycyl-tRNA(Gly) + AMP + diphosphate. This is Glycine--tRNA ligase beta subunit from Pseudomonas fluorescens (strain SBW25).